The chain runs to 206 residues: Thiamine-phosphate synthase (206 aa).

4-amino-2-methyl-5-(diphosphooxymethyl)pyrimidine-binding positions include 35–39 and asparagine 67; that span reads QLRHK. Residues aspartate 68 and aspartate 87 each coordinate Mg(2+). A 4-amino-2-methyl-5-(diphosphooxymethyl)pyrimidine-binding site is contributed by serine 106. 132–134 contacts 2-[(2R,5Z)-2-carboxy-4-methylthiazol-5(2H)-ylidene]ethyl phosphate; it reads TGS. Position 135 (lysine 135) interacts with 4-amino-2-methyl-5-(diphosphooxymethyl)pyrimidine. Glycine 163 serves as a coordination point for 2-[(2R,5Z)-2-carboxy-4-methylthiazol-5(2H)-ylidene]ethyl phosphate.

The protein belongs to the thiamine-phosphate synthase family. Mg(2+) is required as a cofactor.

It carries out the reaction 2-[(2R,5Z)-2-carboxy-4-methylthiazol-5(2H)-ylidene]ethyl phosphate + 4-amino-2-methyl-5-(diphosphooxymethyl)pyrimidine + 2 H(+) = thiamine phosphate + CO2 + diphosphate. The catalysed reaction is 2-(2-carboxy-4-methylthiazol-5-yl)ethyl phosphate + 4-amino-2-methyl-5-(diphosphooxymethyl)pyrimidine + 2 H(+) = thiamine phosphate + CO2 + diphosphate. The enzyme catalyses 4-methyl-5-(2-phosphooxyethyl)-thiazole + 4-amino-2-methyl-5-(diphosphooxymethyl)pyrimidine + H(+) = thiamine phosphate + diphosphate. It participates in cofactor biosynthesis; thiamine diphosphate biosynthesis; thiamine phosphate from 4-amino-2-methyl-5-diphosphomethylpyrimidine and 4-methyl-5-(2-phosphoethyl)-thiazole: step 1/1. Its function is as follows. Condenses 4-methyl-5-(beta-hydroxyethyl)thiazole monophosphate (THZ-P) and 2-methyl-4-amino-5-hydroxymethyl pyrimidine pyrophosphate (HMP-PP) to form thiamine monophosphate (TMP). This Chlorobium phaeobacteroides (strain DSM 266 / SMG 266 / 2430) protein is Thiamine-phosphate synthase.